Consider the following 449-residue polypeptide: NADH-quinone oxidoreductase subunit H (449 aa).

The next 9 helical transmembrane spans lie at 23 to 43 (WWVI…LTLF), 93 to 113 (AVYL…FSVI), 137 to 157 (VAVL…VLGG), 176 to 196 (MISY…YAGS), 209 to 229 (LWYG…MVGE), 258 to 280 (ALFF…TLFL), 300 to 320 (YWPL…FIWL), 332 to 352 (FMAF…VAVA), and 368 to 388 (LLIG…IGGA). The span at 427 to 442 (RSSPIASSMPQPSAAT) shows a compositional bias: polar residues. The interval 427–449 (RSSPIASSMPQPSAATRSAGEEI) is disordered.

It belongs to the complex I subunit 1 family. NDH-1 is composed of 14 different subunits. Subunits NuoA, H, J, K, L, M, N constitute the membrane sector of the complex.

It is found in the cell membrane. The catalysed reaction is a quinone + NADH + 5 H(+)(in) = a quinol + NAD(+) + 4 H(+)(out). In terms of biological role, NDH-1 shuttles electrons from NADH, via FMN and iron-sulfur (Fe-S) centers, to quinones in the respiratory chain. The immediate electron acceptor for the enzyme in this species is believed to be ubiquinone. Couples the redox reaction to proton translocation (for every two electrons transferred, four hydrogen ions are translocated across the cytoplasmic membrane), and thus conserves the redox energy in a proton gradient. This subunit may bind ubiquinone. This chain is NADH-quinone oxidoreductase subunit H, found in Nocardioides sp. (strain ATCC BAA-499 / JS614).